The sequence spans 308 residues: Mu-like prophage FluMu major head subunit (308 aa).

This sequence to phage Mu protein T.

The chain is Mu-like prophage FluMu major head subunit from Haemophilus influenzae (strain ATCC 51907 / DSM 11121 / KW20 / Rd).